The chain runs to 394 residues: Sugar efflux transporter C (394 aa).

At 1–10 (MQKTATTPSK) the chain is on the periplasmic side. The chain crosses the membrane as a helical span at residues 11-31 (ILDLTAAAFLLVAFLTGIAGA). The Cytoplasmic segment spans residues 32–49 (LQTPTLSIFLADELKARP). A helical transmembrane segment spans residues 50 to 70 (IMVGFFFTGSAIMGILVSQFL). Topologically, residues 71-80 (ARHSDKQGDR) are periplasmic. A helical membrane pass occupies residues 81 to 101 (KLLILLCCLFGVLACTLFAWN). Residues 102 to 104 (RNY) lie on the Cytoplasmic side of the membrane. Residues 105-125 (FILLSTGVLLSSFASTANPQM) form a helical membrane-spanning segment. Topologically, residues 126-150 (FALAREHADRTGRETVMFSTFLRAQ) are periplasmic. Residues 151-171 (ISLAWVIGPPLAYELAMGFSF) form a helical membrane-spanning segment. A topological domain (cytoplasmic) is located at residue Lys172. The chain crosses the membrane as a helical span at residues 173–193 (VMYLTAAIAFVVCGLIVWLFL). Topologically, residues 194–224 (PSIQRNIPVVTQPVEILPSTHRKRDTRLLFV) are periplasmic. Residues 225–245 (VCSMMWAANNLYMINMPLFII) traverse the membrane as a helical segment. The Cytoplasmic portion of the chain corresponds to 246-253 (DELHLTDK). The chain crosses the membrane as a helical span at residues 254–274 (LTGEMIGIAAGLEIPMMLIAG). Topologically, residues 275-283 (YYMKRIGKR) are periplasmic. The chain crosses the membrane as a helical span at residues 284 to 304 (LLMLIAIVSGMCFYASVLMAT). Over 305–310 (TPAVEL) the chain is Cytoplasmic. Residues 311-331 (ELQILNAIFLGILCGIGMLYF) form a helical membrane-spanning segment. Topologically, residues 332 to 370 (QDLMPEKIGSATTLYANTSRVGWIIAGSVDGIMVEIWSY) are periplasmic. A helical membrane pass occupies residues 371–391 (HALFWLAIGMLGIAMICLLFI). Residues 392–394 (KDI) lie on the Cytoplasmic side of the membrane.

It belongs to the major facilitator superfamily. Set transporter family.

Its subcellular location is the cell inner membrane. Its function is as follows. Involved in the efflux of sugars. The physiological role may be the detoxification of non-metabolizable sugar analogs. This is Sugar efflux transporter C (setC) from Escherichia coli (strain K12).